A 613-amino-acid polypeptide reads, in one-letter code: Portal protein (613 aa).

The disordered stretch occupies residues 577–613 (ATGGDHGIRQAPSARGDAEPDHAKSKPARDPPPGAGS). Over residues 592-605 (GDAEPDHAKSKPAR) the composition is skewed to basic and acidic residues.

Belongs to the herpesviridae portal protein family. As to quaternary structure, homododecamerizes. Interacts with terminase subunits TRM1 and TRM3.

It is found in the virion. The protein resides in the host nucleus. Functionally, forms a portal in the viral capsid through which viral DNA is translocated during DNA packaging. Assembles as a dodecamer at a single fivefold axe of the T=16 icosahedric capsid. Binds to the molecular motor that translocates the viral DNA, termed terminase. This is Portal protein from Homo sapiens (Human).